Consider the following 546-residue polypeptide: Germacrene-D synthase (546 aa).

Mg(2+) is bound by residues aspartate 303, aspartate 307, aspartate 448, and glutamate 456. The short motif at 303-307 (DDIYD) is the DDXXD motif element.

It belongs to the terpene synthase family. Requires Mg(2+) as cofactor. It depends on Mn(2+) as a cofactor.

It carries out the reaction (2E,6E)-farnesyl diphosphate = (-)-germacrene D + diphosphate. It functions in the pathway secondary metabolite biosynthesis; terpenoid biosynthesis. In terms of biological role, sesquiterpene synthase that catalyzes the formation of germacrene D from trans,trans-farnesyl diphosphate (FPP). In Ocimum basilicum (Sweet basil), this protein is Germacrene-D synthase (GDS).